The following is a 98-amino-acid chain: DNA-binding protein Fis (98 aa).

The H-T-H motif DNA-binding region spans 74–93 (QTRAAVMMGINRGTLRKKLK).

The protein belongs to the transcriptional regulatory Fis family. Homodimer.

In terms of biological role, activates ribosomal RNA transcription. Plays a direct role in upstream activation of rRNA promoters. The chain is DNA-binding protein Fis from Aeromonas hydrophila subsp. hydrophila (strain ATCC 7966 / DSM 30187 / BCRC 13018 / CCUG 14551 / JCM 1027 / KCTC 2358 / NCIMB 9240 / NCTC 8049).